Here is a 356-residue protein sequence, read N- to C-terminus: Photosystem II protein D1 (356 aa).

3 helical membrane-spanning segments follow: residues 29–46 (YVGWFGTLMIPTLLTATT), 118–133 (HFLIGIFCYMGRQWEL), and 142–156 (WICVAYSAPVSAATA). His118 contributes to the chlorophyll a binding site. Residue Tyr126 coordinates pheophytin a. 2 residues coordinate [CaMn4O5] cluster: Asp170 and Glu189. A helical membrane pass occupies residues 197–218 (FHMLGVAGVFGGSLFSAMHGSL). Chlorophyll a is bound at residue His198. A quinone contacts are provided by residues His215 and 264 to 265 (SF). His215 provides a ligand contact to Fe cation. Residue His272 coordinates Fe cation. A helical transmembrane segment spans residues 274–288 (FLGAWPVIGIWFTAM). 4 residues coordinate [CaMn4O5] cluster: His332, Glu333, Asp342, and Ala344. The propeptide occupies 345-356 (SAEPVSAPVING).

It belongs to the reaction center PufL/M/PsbA/D family. As to quaternary structure, PSII is composed of 1 copy each of membrane proteins PsbA, PsbB, PsbC, PsbD, PsbE, PsbF, PsbH, PsbI, PsbJ, PsbK, PsbL, PsbM, PsbT, PsbX, PsbY, PsbZ, Psb30/Ycf12, peripheral proteins PsbO, CyanoQ (PsbQ), PsbU, PsbV and a large number of cofactors. It forms dimeric complexes. The cofactor is The D1/D2 heterodimer binds P680, chlorophylls that are the primary electron donor of PSII, and subsequent electron acceptors. It shares a non-heme iron and each subunit binds pheophytin, quinone, additional chlorophylls, carotenoids and lipids. D1 provides most of the ligands for the Mn4-Ca-O5 cluster of the oxygen-evolving complex (OEC). There is also a Cl(-1) ion associated with D1 and D2, which is required for oxygen evolution. The PSII complex binds additional chlorophylls, carotenoids and specific lipids.. Post-translationally, tyr-161 forms a radical intermediate that is referred to as redox-active TyrZ, YZ or Y-Z. C-terminally processed by CtpA; processing is essential to allow assembly of the oxygen-evolving complex and thus photosynthetic growth.

Its subcellular location is the cellular thylakoid membrane. It catalyses the reaction 2 a plastoquinone + 4 hnu + 2 H2O = 2 a plastoquinol + O2. Photosystem II (PSII) is a light-driven water:plastoquinone oxidoreductase that uses light energy to abstract electrons from H(2)O, generating O(2) and a proton gradient subsequently used for ATP formation. It consists of a core antenna complex that captures photons, and an electron transfer chain that converts photonic excitation into a charge separation. The D1/D2 (PsbA/PsbD) reaction center heterodimer binds P680, the primary electron donor of PSII as well as several subsequent electron acceptors. The sequence is that of Photosystem II protein D1 from Crocosphaera subtropica (strain ATCC 51142 / BH68) (Cyanothece sp. (strain ATCC 51142)).